A 95-amino-acid chain; its full sequence is Acylphosphatase (95 aa).

Residues 7–95 (CTMAWVYGSV…RSWDKFAILY (89 aa)) form the Acylphosphatase-like domain. Residues Arg-22 and Asn-40 contribute to the active site.

Belongs to the acylphosphatase family.

The enzyme catalyses an acyl phosphate + H2O = a carboxylate + phosphate + H(+). In Klebsiella pneumoniae subsp. pneumoniae (strain ATCC 700721 / MGH 78578), this protein is Acylphosphatase (acyP).